The chain runs to 136 residues: Protein NrdI (136 aa).

The protein belongs to the NrdI family.

Functionally, probably involved in ribonucleotide reductase function. The sequence is that of Protein NrdI from Shigella boydii serotype 4 (strain Sb227).